The sequence spans 142 residues: Large ribosomal subunit protein uL13 (142 aa).

The protein belongs to the universal ribosomal protein uL13 family. Part of the 50S ribosomal subunit.

Its function is as follows. This protein is one of the early assembly proteins of the 50S ribosomal subunit, although it is not seen to bind rRNA by itself. It is important during the early stages of 50S assembly. The chain is Large ribosomal subunit protein uL13 from Acidithiobacillus ferrooxidans (strain ATCC 23270 / DSM 14882 / CIP 104768 / NCIMB 8455) (Ferrobacillus ferrooxidans (strain ATCC 23270)).